Consider the following 134-residue polypeptide: Citrolysin protein 2 (134 aa).

This is Citrolysin protein 2 from Citrobacter freundii.